The sequence spans 141 residues: Glutamyl-tRNA(Gln) amidotransferase subunit C, chloroplastic/mitochondrial (141 aa).

Belongs to the GatC family. Subunit of the heterotrimeric GatCAB amidotransferase (AdT) complex, composed of A, B and C subunits.

Its subcellular location is the mitochondrion. The protein localises to the plastid. The protein resides in the chloroplast. It catalyses the reaction L-glutamyl-tRNA(Gln) + L-glutamine + ATP + H2O = L-glutaminyl-tRNA(Gln) + L-glutamate + ADP + phosphate + H(+). Functionally, allows the formation of correctly charged Gln-tRNA(Gln) through the transamidation of misacylated Glu-tRNA(Gln) in chloroplasts and mitochondria. The reaction takes place in the presence of glutamine and ATP through an activated gamma-phospho-Glu-tRNA(Gln). The sequence is that of Glutamyl-tRNA(Gln) amidotransferase subunit C, chloroplastic/mitochondrial from Populus trichocarpa (Western balsam poplar).